A 504-amino-acid chain; its full sequence is Maturase K (504 aa).

This sequence belongs to the intron maturase 2 family. MatK subfamily.

It is found in the plastid. Its subcellular location is the chloroplast. In terms of biological role, usually encoded in the trnK tRNA gene intron. Probably assists in splicing its own and other chloroplast group II introns. The polypeptide is Maturase K (Draba nemorosa (Woodland whitlowgrass)).